The chain runs to 89 residues: Small ribosomal subunit protein uS15 (89 aa).

Belongs to the universal ribosomal protein uS15 family. In terms of assembly, part of the 30S ribosomal subunit. Forms a bridge to the 50S subunit in the 70S ribosome, contacting the 23S rRNA.

In terms of biological role, one of the primary rRNA binding proteins, it binds directly to 16S rRNA where it helps nucleate assembly of the platform of the 30S subunit by binding and bridging several RNA helices of the 16S rRNA. Functionally, forms an intersubunit bridge (bridge B4) with the 23S rRNA of the 50S subunit in the ribosome. The protein is Small ribosomal subunit protein uS15 of Acaryochloris marina (strain MBIC 11017).